The chain runs to 91 residues: Potassium channel toxin MeuTXK-beta-1 (91 aa).

Positions 1 to 19 are cleaved as a signal peptide; sequence MQRNLVVLLFLGMVALSSC. Positions 54-91 constitute a BetaSPN-type CS-alpha/beta domain; the sequence is QFGCPAYQGYCDDHCQDIEKKEGFCHGFKCKCGIPMGF. 3 cysteine pairs are disulfide-bonded: Cys57–Cys78, Cys64–Cys83, and Cys68–Cys85.

As to expression, expressed by the venom gland.

The protein localises to the secreted. Its function is as follows. Has a low affinity binding to potassium channels of rat brain synaptosomes. Displays weak antibacterial activity against Stenotrophomonas sp. Strongly inhibits the development of the Plasmodium berghei ookinetes. Displays slight hemolytic effect on mouse erythrocytes. Induces cytolysis on Xenopus oocytes at high concentrations. Is not toxic towards mice and towards the insect Tenebrio molitor. This Mesobuthus eupeus (Lesser Asian scorpion) protein is Potassium channel toxin MeuTXK-beta-1.